The primary structure comprises 512 residues: Cytochrome P450 26B1 (512 aa).

Cys-441 is a heme binding site.

It belongs to the cytochrome P450 family. Heme is required as a cofactor.

It localises to the endoplasmic reticulum membrane. The protein localises to the microsome membrane. The enzyme catalyses all-trans-retinoate + reduced [NADPH--hemoprotein reductase] + O2 = all-trans-4-hydroxyretinoate + oxidized [NADPH--hemoprotein reductase] + H2O + H(+). It catalyses the reaction all-trans-retinoate + reduced [NADPH--hemoprotein reductase] + O2 = all-trans-18-hydroxyretinoate + oxidized [NADPH--hemoprotein reductase] + H2O + H(+). Its function is as follows. A cytochrome P450 monooxygenase involved in the metabolism of retinoates (RAs), the active metabolites of vitamin A, and critical signaling molecules in animals. RAs exist as at least four different isomers: all-trans-RA (atRA), 9-cis-RA, 13-cis-RA, and 9,13-dicis-RA, where atRA is considered to be the biologically active isomer, although 9-cis-RA and 13-cis-RA also have activity. Catalyzes the hydroxylation of atRA primarily at C-4 and C-18, thereby contributing to the regulation of atRA homeostasis and signaling. Hydroxylation of atRA limits its biological activity and initiates a degradative process leading to its eventual elimination. Involved in the convertion of atRA to all-trans-4-oxo-RA. Can oxidize all-trans-13,14-dihydroretinoate (DRA) to metabolites which could include all-trans-4-oxo-DRA, all-trans-4-hydroxy-DRA, all-trans-5,8-epoxy-DRA, and all-trans-18-hydroxy-DRA. Shows preference for the following substrates: atRA &gt; 9-cis-RA &gt; 13-cis-RA. Plays a central role in germ cell development: acts by degrading RAs in the developing testis, preventing STRA8 expression, thereby leading to delay of meiosis. Required for the maintenance of the undifferentiated state of male germ cells during embryonic development in Sertoli cells, inducing arrest in G0 phase of the cell cycle and preventing meiotic entry. Plays a role in skeletal development, both at the level of patterning and in the ossification of bone and the establishment of some synovial joints. Essential for postnatal survival. Functionally, also has a significant activity in oxidation of tazarotenic acid and may therefore metabolize that xenobiotic in vivo. The chain is Cytochrome P450 26B1 (Cyp26b1) from Mus musculus (Mouse).